A 623-amino-acid chain; its full sequence is Pyranose 2-oxidase (623 aa).

An N-terminal signal peptide occupies residues 1–28 (MSTSSSDPFFNFAKSSFRSAAAQKASAS). Residues 29–38 (SLPPLPGPDK) constitute a propeptide that is removed on maturation. His-167 carries the tele-8alpha-FAD histidine modification. The substrate site is built by Gln-448 and His-450. Residue His-548 is the Proton acceptor of the active site. Residue Asn-593 is part of the active site.

This sequence belongs to the GMC oxidoreductase family. Homotetramer. FAD is required as a cofactor.

Its subcellular location is the periplasm. The enzyme catalyses D-glucose + O2 = 2-dehydro-D-glucose + H2O2. Its function is as follows. Catalyzes the oxidation of various aldopyranoses and disaccharides on carbon-2 to the corresponding 2-keto sugars concomitant with the reduction of O(2) to H(2)O(2). Plays an important role in lignin degradation of wood rot fungi by supplying the essential cosubstrate H(2)O(2) for the ligninolytic peroxidases, lignin peroxidase and manganese-dependent peroxidase. The protein is Pyranose 2-oxidase (p2ox) of Peniophora sp. (strain SG) (White-rot fungus).